The sequence spans 71 residues: MKQGIHPEYKEITVTCSCGNVIKTRSTAGHDINLDVCGNCHPFYTGKQRVVDTGGRVERFNKRFSIPGSKK.

Zn(2+) contacts are provided by Cys16, Cys18, Cys37, and Cys40.

Belongs to the bacterial ribosomal protein bL31 family. Type A subfamily. In terms of assembly, part of the 50S ribosomal subunit. The cofactor is Zn(2+).

Binds the 23S rRNA. The chain is Large ribosomal subunit protein bL31 from Mannheimia succiniciproducens (strain KCTC 0769BP / MBEL55E).